Reading from the N-terminus, the 942-residue chain is Homeobox protein 2 (942 aa).

2 stretches are compositionally biased toward low complexity: residues 32–87 and 98–130; these read ECNE…NINE and SPYSSPSSSISSPSRSPSPNSPASSSPIHSPIP. Disordered regions lie at residues 32-149, 161-494, 537-580, and 609-942; these read ECNE…PQNI, LESP…RLKK, RQEK…QGGA, and FKNN…CQQN. Residues 131–149 are compositionally biased toward polar residues; it reads NTNFKQSGEYQSIPSPQNI. The segment covering 163 to 261 has biased composition (low complexity); that stretch reads SPNSSNSSPS…PSSNLSKSNS (99 aa). Residues 269–290 are compositionally biased toward polar residues; sequence QAPSNTSSPQLLSPNHNQQRIS. Low complexity-rich tracts occupy residues 299–430 and 450–464; these read NNNH…NSSP and NNNNNNNNNNNSNSS. Over residues 465–481 the composition is skewed to polar residues; the sequence is FDEYQPQQKVSRSNSPN. Residues 485–544 constitute a DNA-binding region (homeobox); it reads EKKRRTRLKKEQADILKTFFDNDDYPTKDDKETLANRLGMSYCAVTTWFSNKRQEKKRRG. 6 stretches are compositionally biased toward low complexity: residues 609-621, 628-685, 694-737, 752-764, 776-864, and 890-927; these read FKNNNMDNNNKNV, NNNN…GSSD, NNNN…NNNN, NNNNNNNNNNNNN, SDDT…YLNN, and NNFNGDNNNNNNNKNNNNNNQNNNGNGNNNNNNNNDNN. Positions 835-865 form a coiled coil; the sequence is NNNNNNNNQNNNNNNNNNQYNNNNKNYLNNI.

The protein localises to the nucleus. In terms of biological role, putative transcription factor that may potentiate the function of warA. The polypeptide is Homeobox protein 2 (hbx2) (Dictyostelium discoideum (Social amoeba)).